We begin with the raw amino-acid sequence, 444 residues long: Glutamyl-tRNA reductase (444 aa).

Residues 49–52, serine 109, 114–116, and glutamine 120 each bind substrate; these read TCNR and ETQ. Cysteine 50 acts as the Nucleophile in catalysis. Residue 189-194 participates in NADP(+) binding; it reads GAGKMG.

Belongs to the glutamyl-tRNA reductase family. In terms of assembly, homodimer.

The enzyme catalyses (S)-4-amino-5-oxopentanoate + tRNA(Glu) + NADP(+) = L-glutamyl-tRNA(Glu) + NADPH + H(+). Its pathway is porphyrin-containing compound metabolism; protoporphyrin-IX biosynthesis; 5-aminolevulinate from L-glutamyl-tRNA(Glu): step 1/2. Functionally, catalyzes the NADPH-dependent reduction of glutamyl-tRNA(Glu) to glutamate 1-semialdehyde (GSA). In Bacillus cereus (strain ATCC 10987 / NRS 248), this protein is Glutamyl-tRNA reductase.